The chain runs to 340 residues: Ketol-acid reductoisomerase (NADP(+)) (340 aa).

Residues 3 to 182 (VEMLYEADVK…GSARVGLLVT (180 aa)) enclose the KARI N-terminal Rossmann domain. NADP(+) is bound by residues 26-29 (YGSQ), Arg-49, Ser-53, and 83-86 (DEIQ). Residue His-108 is part of the active site. Gly-134 lines the NADP(+) pocket. The 146-residue stretch at 183 to 328 (TFKEETEEDL…AELRKAMPFV (146 aa)) folds into the KARI C-terminal knotted domain. Positions 191, 195, 227, and 231 each coordinate Mg(2+). Ser-252 contacts substrate.

The protein belongs to the ketol-acid reductoisomerase family. The cofactor is Mg(2+).

It carries out the reaction (2R)-2,3-dihydroxy-3-methylbutanoate + NADP(+) = (2S)-2-acetolactate + NADPH + H(+). The enzyme catalyses (2R,3R)-2,3-dihydroxy-3-methylpentanoate + NADP(+) = (S)-2-ethyl-2-hydroxy-3-oxobutanoate + NADPH + H(+). It functions in the pathway amino-acid biosynthesis; L-isoleucine biosynthesis; L-isoleucine from 2-oxobutanoate: step 2/4. Its pathway is amino-acid biosynthesis; L-valine biosynthesis; L-valine from pyruvate: step 2/4. In terms of biological role, involved in the biosynthesis of branched-chain amino acids (BCAA). Catalyzes an alkyl-migration followed by a ketol-acid reduction of (S)-2-acetolactate (S2AL) to yield (R)-2,3-dihydroxy-isovalerate. In the isomerase reaction, S2AL is rearranged via a Mg-dependent methyl migration to produce 3-hydroxy-3-methyl-2-ketobutyrate (HMKB). In the reductase reaction, this 2-ketoacid undergoes a metal-dependent reduction by NADPH to yield (R)-2,3-dihydroxy-isovalerate. The polypeptide is Ketol-acid reductoisomerase (NADP(+)) (Streptococcus mutans serotype c (strain ATCC 700610 / UA159)).